The chain runs to 706 residues: Fatty acid oxidation complex subunit alpha (706 aa).

Residues 1–188 (MDKSFTLNRL…KMGLVDDVVP (188 aa)) are enoyl-CoA hydratase. Residues 308–706 (KAVNKVMVLG…MAESGSKFYE (399 aa)) are 3-hydroxyacyl-CoA dehydrogenase.

In the N-terminal section; belongs to the enoyl-CoA hydratase/isomerase family. It in the central section; belongs to the 3-hydroxyacyl-CoA dehydrogenase family. As to quaternary structure, heterotetramer of two alpha chains (FadJ) and two beta chains (FadI).

The protein localises to the cytoplasm. The enzyme catalyses a (3S)-3-hydroxyacyl-CoA = a (2E)-enoyl-CoA + H2O. It catalyses the reaction a 4-saturated-(3S)-3-hydroxyacyl-CoA = a (3E)-enoyl-CoA + H2O. The catalysed reaction is a (3S)-3-hydroxyacyl-CoA + NAD(+) = a 3-oxoacyl-CoA + NADH + H(+). It carries out the reaction (3S)-3-hydroxybutanoyl-CoA = (3R)-3-hydroxybutanoyl-CoA. The protein operates within lipid metabolism; fatty acid beta-oxidation. Catalyzes the formation of a hydroxyacyl-CoA by addition of water on enoyl-CoA. Also exhibits 3-hydroxyacyl-CoA epimerase and 3-hydroxyacyl-CoA dehydrogenase activities. This chain is Fatty acid oxidation complex subunit alpha, found in Shewanella loihica (strain ATCC BAA-1088 / PV-4).